Here is a 755-residue protein sequence, read N- to C-terminus: Polyribonucleotide nucleotidyltransferase (755 aa).

Mg(2+) is bound by residues Asp482 and Asp488. The region spanning 549–608 is the KH domain; the sequence is PRMVSFYIDKDKISAAIGAKGKNIRSVCERSNAKIEIGDDGKVSVFAMSSAEAEIAKNMM. The S1 motif domain maps to 618–686; sequence GAIVDVKVVK…KGGCPKLSRR (69 aa). The span at 702 to 714 shows a compositional bias: basic and acidic residues; the sequence is NEEKKDSSNDRDY. A disordered region spans residues 702–755; sequence NEEKKDSSNDRDYYNSPFNRKSGHRKRPVHSRSSFSNRNNRPKFGNDDSSSSFY. A compositionally biased stretch (basic residues) spans 722–731; that stretch reads KSGHRKRPVH.

This sequence belongs to the polyribonucleotide nucleotidyltransferase family. Requires Mg(2+) as cofactor.

The protein resides in the cytoplasm. It carries out the reaction RNA(n+1) + phosphate = RNA(n) + a ribonucleoside 5'-diphosphate. In terms of biological role, involved in mRNA degradation. Catalyzes the phosphorolysis of single-stranded polyribonucleotides processively in the 3'- to 5'-direction. The protein is Polyribonucleotide nucleotidyltransferase of Wolbachia sp. subsp. Brugia malayi (strain TRS).